Consider the following 134-residue polypeptide: Small ribosomal subunit protein uS11 (134 aa).

Belongs to the universal ribosomal protein uS11 family. In terms of assembly, part of the 30S ribosomal subunit. Interacts with proteins S7 and S18. Binds to IF-3.

Its function is as follows. Located on the platform of the 30S subunit, it bridges several disparate RNA helices of the 16S rRNA. Forms part of the Shine-Dalgarno cleft in the 70S ribosome. The polypeptide is Small ribosomal subunit protein uS11 (Corynebacterium jeikeium (strain K411)).